The following is a 640-amino-acid chain: Glycosyltransferase-like protein gnt14 (640 aa).

The Cytoplasmic portion of the chain corresponds to 1-14 (MFGFKTTKNKKRVR). Residues 15–35 (LLVVAIGVMIFFMCLSNFSSI) form a helical; Signal-anchor for type II membrane protein membrane-spanning segment. At 36–640 (QSRQSSSTDT…TENCYSNDHW (605 aa)) the chain is on the extracellular side. Disordered regions lie at residues 63 to 184 (PSIN…PLSS) and 254 to 277 (NSNNNNNNNNNNNNNNNNNNNNNY). Low complexity predominate over residues 65–171 (ININNSENNI…NININNNNKP (107 aa)). N-linked (GlcNAc...) asparagine glycosylation occurs at Asn68. N-linked (GlcNAc...) asparagine glycosylation is found at Asn410 and Asn539.

It belongs to the glycosyltransferase 8 family. Highly divergent.

The protein localises to the membrane. This is Glycosyltransferase-like protein gnt14 (gnt14) from Dictyostelium discoideum (Social amoeba).